Reading from the N-terminus, the 2521-residue chain is Partially reducing polyketide synthase tpeA (2521 aa).

Residues 7–434 (DQSIAVIGLS…GSNAHAIIDN (428 aa)) form the Ketosynthase family 3 (KS3) domain. Positions 47–66 (RWNSRRFQDDKNHSQNTSRT) are disordered. Residues Cys180, His315, and His357 each act as for beta-ketoacyl synthase activity in the active site. A Malonyl-CoA:ACP transacylase (MAT) domain is found at 554–855 (YVFTGQGAQW…LRGPVTQILQ (302 aa)). Residues 948–1088 (SSFIGLPMPS…GLVTVEFEQL (141 aa)) form an N-terminal hotdog fold region. The PKS/mFAS DH domain occupies 948–1258 (SSFIGLPMPS…CVEMPSTAGV (311 aa)). The tract at residues 949–1256 (SFIGLPMPSF…LTCVEMPSTA (308 aa)) is dehydratase (DH) domain. A C-terminal hotdog fold region spans residues 1100 to 1258 (TTVQQAEAFY…CVEMPSTAGV (159 aa)). Residues 1809 to 2121 (GMLNTLCFQA…DNRHHGKITL (313 aa)) form the Enoyl reductase (ER) domain. The Ketoreductase (KR) domain occupies 2146 to 2323 (TYLIAGGLGG…AVTIDLGIVK (178 aa)). In terms of domain architecture, Carrier spans 2433-2510 (DAVLFVTGAV…SFARDLVGKG (78 aa)). An O-(pantetheine 4'-phosphoryl)serine modification is found at Ser2470.

Pantetheine 4'-phosphate serves as cofactor.

It participates in secondary metabolite biosynthesis. Functionally, partially reducing polyketide synthase; part of the gene cluster that mediates the biosynthesis of polyesters containing 2,4-dihydroxy-6-(2-hydroxypropyl)benzoate and 3-hydroxybutyrate moieties, such as talapolyester G, 15G256beta and 15G256beta-2; as well as to oxidized derivatives such as 15G256alpha. The biosynthesis of the polyesters probably starts with the formation of the diketide 3-hydroxybutyryl-S-ACP catalyzed by the partially reducing polyketide synthase tpeA. The acceptance of 3-hydroxybutyryl by the non-reducing polyketide synthase tpeB would initiate further elongation and cyclization, catalyzed by KS and PT, respectively, to form 2,4-dihydroxy-6-(2-hydroxyn-propyl)benzoyl-S-ACP intermediate. The TE domain could catalyze lactonization at this step to yield 6-hydroxymellein as a derailment product. The polyesterification process maybe occurs when additional molecules of 3-hydroxybutyryl are transferred to tpeB. Following the first esterification step, an intramolecular cyclization catalyzed by the TE domain of tpeB would give talarodioxadione 1, whereas the ethyl esterification of talapolyester G perhaps happens spontaneously. Further oxidation by the cytochrome P450 monooxygenase tpeC then leads to the formation of oxidized derivatives. This is Partially reducing polyketide synthase tpeA from Talaromyces stipitatus (strain ATCC 10500 / CBS 375.48 / QM 6759 / NRRL 1006) (Penicillium stipitatum).